A 356-amino-acid polypeptide reads, in one-letter code: S-adenosylmethionine:tRNA ribosyltransferase-isomerase (356 aa).

It belongs to the QueA family. In terms of assembly, monomer.

The protein resides in the cytoplasm. The enzyme catalyses 7-aminomethyl-7-carbaguanosine(34) in tRNA + S-adenosyl-L-methionine = epoxyqueuosine(34) in tRNA + adenine + L-methionine + 2 H(+). The protein operates within tRNA modification; tRNA-queuosine biosynthesis. Transfers and isomerizes the ribose moiety from AdoMet to the 7-aminomethyl group of 7-deazaguanine (preQ1-tRNA) to give epoxyqueuosine (oQ-tRNA). The protein is S-adenosylmethionine:tRNA ribosyltransferase-isomerase of Nitrosospira multiformis (strain ATCC 25196 / NCIMB 11849 / C 71).